Reading from the N-terminus, the 589-residue chain is 2-succinyl-5-enolpyruvyl-6-hydroxy-3-cyclohexene-1-carboxylate synthase (589 aa).

The tract at residues 198–222 (DAATTEGAHDSHAPSQPTRGPRKLP) is disordered.

The protein belongs to the TPP enzyme family. MenD subfamily. As to quaternary structure, homodimer. Requires Mg(2+) as cofactor. Mn(2+) serves as cofactor. Thiamine diphosphate is required as a cofactor.

It catalyses the reaction isochorismate + 2-oxoglutarate + H(+) = 5-enolpyruvoyl-6-hydroxy-2-succinyl-cyclohex-3-ene-1-carboxylate + CO2. The protein operates within quinol/quinone metabolism; 1,4-dihydroxy-2-naphthoate biosynthesis; 1,4-dihydroxy-2-naphthoate from chorismate: step 2/7. It functions in the pathway quinol/quinone metabolism; menaquinone biosynthesis. In terms of biological role, catalyzes the thiamine diphosphate-dependent decarboxylation of 2-oxoglutarate and the subsequent addition of the resulting succinic semialdehyde-thiamine pyrophosphate anion to isochorismate to yield 2-succinyl-5-enolpyruvyl-6-hydroxy-3-cyclohexene-1-carboxylate (SEPHCHC). In Corynebacterium jeikeium (strain K411), this protein is 2-succinyl-5-enolpyruvyl-6-hydroxy-3-cyclohexene-1-carboxylate synthase.